A 79-amino-acid polypeptide reads, in one-letter code: CDC42 small effector protein 1 (79 aa).

Residues cysteine 10 and cysteine 11 are each lipidated (S-palmitoyl cysteine). The CRIB domain occupies isoleucine 30–glycine 43. A disordered region spans residues glycine 48–leucine 79. A compositionally biased stretch (basic and acidic residues) spans methionine 63–proline 72.

This sequence belongs to the CDC42SE/SPEC family. In terms of assembly, interacts with CDC42 (in GTP-bound form). Interacts weakly with RAC1 and not at all with RHOA.

Its subcellular location is the cytoplasm. The protein localises to the cytoskeleton. It localises to the cell membrane. Functionally, probably involved in the organization of the actin cytoskeleton by acting downstream of CDC42, inducing actin filament assembly. Alters CDC42-induced cell shape changes. In activated T-cells, may play a role in CDC42-mediated F-actin accumulation at the immunological synapse. May play a role in early contractile events in phagocytosis in macrophages. The protein is CDC42 small effector protein 1 (CDC42SE1) of Pongo abelii (Sumatran orangutan).